The sequence spans 255 residues: 1-(5-phosphoribosyl)-5-[(5-phosphoribosylamino)methylideneamino] imidazole-4-carboxamide isomerase (255 aa).

The active-site Proton acceptor is the Asp8. The active-site Proton donor is Asp129.

The protein belongs to the HisA/HisF family.

The protein localises to the cytoplasm. The catalysed reaction is 1-(5-phospho-beta-D-ribosyl)-5-[(5-phospho-beta-D-ribosylamino)methylideneamino]imidazole-4-carboxamide = 5-[(5-phospho-1-deoxy-D-ribulos-1-ylimino)methylamino]-1-(5-phospho-beta-D-ribosyl)imidazole-4-carboxamide. The protein operates within amino-acid biosynthesis; L-histidine biosynthesis; L-histidine from 5-phospho-alpha-D-ribose 1-diphosphate: step 4/9. The protein is 1-(5-phosphoribosyl)-5-[(5-phosphoribosylamino)methylideneamino] imidazole-4-carboxamide isomerase of Prochlorococcus marinus (strain MIT 9301).